A 134-amino-acid chain; its full sequence is Probable glycine cleavage system H protein (134 aa).

One can recognise a Lipoyl-binding domain in the interval 29–110; the sequence is TVLVGITDYA…PYENWIAKLK (82 aa). Lys-70 is subject to N6-lipoyllysine.

This sequence belongs to the GcvH family. In terms of assembly, the glycine cleavage system is composed of four proteins: P, T, L and H. Requires (R)-lipoate as cofactor.

Functionally, the glycine cleavage system catalyzes the degradation of glycine. The H protein shuttles the methylamine group of glycine from the P protein to the T protein. The chain is Probable glycine cleavage system H protein from Thermococcus gammatolerans (strain DSM 15229 / JCM 11827 / EJ3).